A 67-amino-acid polypeptide reads, in one-letter code: ATP synthase protein 8 (67 aa).

Residues 8-24 (TWFITILATILTLFIIM) traverse the membrane as a helical segment. Lys-54 is subject to N6-acetyllysine; alternate. N6-succinyllysine; alternate is present on Lys-54. Lys-57 carries the N6-acetyllysine modification.

It belongs to the ATPase protein 8 family. As to quaternary structure, F-type ATPases have 2 components, CF(1) - the catalytic core - and CF(0) - the membrane proton channel. Component of an ATP synthase complex composed of ATP5PB, ATP5MC1, ATP5F1E, ATP5PD, ATP5ME, ATP5PF, ATP5MF, MT-ATP6, MT-ATP8, ATP5F1A, ATP5F1B, ATP5F1D, ATP5F1C, ATP5PO, ATP5MG, ATP5MK and ATP5MJ. Interacts with PRICKLE3.

It is found in the mitochondrion membrane. In terms of biological role, mitochondrial membrane ATP synthase (F(1)F(0) ATP synthase or Complex V) produces ATP from ADP in the presence of a proton gradient across the membrane which is generated by electron transport complexes of the respiratory chain. F-type ATPases consist of two structural domains, F(1) - containing the extramembraneous catalytic core and F(0) - containing the membrane proton channel, linked together by a central stalk and a peripheral stalk. During catalysis, ATP synthesis in the catalytic domain of F(1) is coupled via a rotary mechanism of the central stalk subunits to proton translocation. Part of the complex F(0) domain. Minor subunit located with subunit a in the membrane. In Artibeus jamaicensis (Jamaican fruit-eating bat), this protein is ATP synthase protein 8 (MT-ATP8).